Here is a 163-residue protein sequence, read N- to C-terminus: NADH-quinone oxidoreductase subunit I (163 aa).

2 4Fe-4S ferredoxin-type domains span residues 53 to 83 (LRRY…IEAG) and 94 to 123 (VRYD…EGPN). Residues C63, C66, C69, C73, C103, C106, C109, and C113 each contribute to the [4Fe-4S] cluster site.

Belongs to the complex I 23 kDa subunit family. In terms of assembly, NDH-1 is composed of 14 different subunits. Subunits NuoA, H, J, K, L, M, N constitute the membrane sector of the complex. The cofactor is [4Fe-4S] cluster.

It is found in the cell inner membrane. It carries out the reaction a quinone + NADH + 5 H(+)(in) = a quinol + NAD(+) + 4 H(+)(out). In terms of biological role, NDH-1 shuttles electrons from NADH, via FMN and iron-sulfur (Fe-S) centers, to quinones in the respiratory chain. The immediate electron acceptor for the enzyme in this species is believed to be ubiquinone. Couples the redox reaction to proton translocation (for every two electrons transferred, four hydrogen ions are translocated across the cytoplasmic membrane), and thus conserves the redox energy in a proton gradient. This chain is NADH-quinone oxidoreductase subunit I, found in Brucella melitensis biotype 1 (strain ATCC 23456 / CCUG 17765 / NCTC 10094 / 16M).